The primary structure comprises 84 residues: Large ribosomal subunit protein bL31B-2 (84 aa).

This sequence belongs to the bacterial ribosomal protein bL31 family. Type B subfamily. As to quaternary structure, part of the 50S ribosomal subunit.

The polypeptide is Large ribosomal subunit protein bL31B-2 (Streptomyces coelicolor (strain ATCC BAA-471 / A3(2) / M145)).